A 510-amino-acid polypeptide reads, in one-letter code: ATP synthase subunit alpha (510 aa).

ATP is bound at residue 169 to 176; sequence GDRQTGKT.

This sequence belongs to the ATPase alpha/beta chains family. F-type ATPases have 2 components, CF(1) - the catalytic core - and CF(0) - the membrane proton channel. CF(1) has five subunits: alpha(3), beta(3), gamma(1), delta(1), epsilon(1). CF(0) has three main subunits: a(1), b(2) and c(9-12). The alpha and beta chains form an alternating ring which encloses part of the gamma chain. CF(1) is attached to CF(0) by a central stalk formed by the gamma and epsilon chains, while a peripheral stalk is formed by the delta and b chains.

The protein resides in the cell inner membrane. It carries out the reaction ATP + H2O + 4 H(+)(in) = ADP + phosphate + 5 H(+)(out). In terms of biological role, produces ATP from ADP in the presence of a proton gradient across the membrane. The alpha chain is a regulatory subunit. The protein is ATP synthase subunit alpha of Rickettsia massiliae (strain Mtu5).